Here is a 1449-residue protein sequence, read N- to C-terminus: Disease resistance protein RPP5 (1449 aa).

The region spanning 10-178 (RRYDVFPSFS…KISNDVSNKL (169 aa)) is the TIR domain. E85 is a catalytic residue. In terms of domain architecture, NB-ARC spans 192 to 446 (EAHIEAIKSV…IACLFNGFEV (255 aa)). LRR repeat units follow at residues 549–573 (MRNL…VYLP), 574–595 (LKLR…TFKA), 597–618 (YLVN…TLPL), 619–642 (GSLK…SNAR), 644–665 (LEEL…IQNA), 687–710 (MCNL…VYFP), 712–732 (KLRL…NFKV), 733–755 (EYLV…TQPL), 756–779 (GRLK…SLAI), 802–825 (AIKL…DLNL), 826–849 (ESLE…KMGC), 915–939 (LGSL…SKAT), 941–962 (LKHL…IGNL), 963–985 (QKLV…DVNL), 986–1011 (SSLE…SIKW), 1028–1052 (ATKL…IGNL), 1053–1077 (QNLR…NLSS), 1096–1119 (STNI…IEDF), and 1120–1143 (TRLR…IFRL).

As to quaternary structure, interacts with RSH1.

It catalyses the reaction NAD(+) + H2O = ADP-D-ribose + nicotinamide + H(+). TIR-NB-LRR receptor-like protein that confers resistance to the pathogen Hyaloperonospora arabidopsis isolate Noco2 (downy mildew disease). Confers resistance to H.arabidopsis isolates Emoy2, Emwa1 and Noco2. This is Disease resistance protein RPP5 from Arabidopsis thaliana (Mouse-ear cress).